The chain runs to 910 residues: Constitutive coactivator of peroxisome proliferator-activated receptor gamma (910 aa).

3 disordered regions span residues 333-416, 443-483, and 863-910; these read SDAE…VPMC, SEPR…ESRQ, and SHHA…WRRY. Basic and acidic residues-rich tracts occupy residues 335-351, 360-375, and 396-411; these read AESR…ESRQ and ESRR…EPRQ. Positions 872–890 are enriched in polar residues; it reads QGSSYHRTGSGYSRSSQGQ. Omega-N-methylarginine is present on R885. Residues 901–910 are compositionally biased toward basic and acidic residues; it reads QYEHDQWRRY.

The protein belongs to the constitutive coactivator of PPAR-gamma family. In terms of assembly, interacts with ESR1 and RXRA. Interacts with PPARG; in a ligand-independent manner. As to expression, widely expressed.

The protein localises to the nucleus. In terms of biological role, functions as a transactivator of PPARG and ESR1. Functions in adipogenesis through PPARG activation. This Homo sapiens (Human) protein is Constitutive coactivator of peroxisome proliferator-activated receptor gamma (FAM120B).